The primary structure comprises 233 residues: Protein Thf1 (233 aa).

Positions 183-205 (DKLSKDLELYRSNLDKMTQALAV) form a coiled coil. The tract at residues 213–233 (DRKKREQRQQQASTPVAPPNE) is disordered.

Belongs to the THF1 family.

May be involved in photosynthetic membrane biogenesis. The polypeptide is Protein Thf1 (Trichormus variabilis (strain ATCC 29413 / PCC 7937) (Anabaena variabilis)).